Consider the following 296-residue polypeptide: 4-hydroxybenzoate octaprenyltransferase (296 aa).

Transmembrane regions (helical) follow at residues 28-48, 51-71, 102-122, 143-163, 174-194, 212-232, 233-253, and 274-294; these read IGTL…SDGI, LAVL…GCVI, LLLT…LNHL, FFPI…PMAF, AWIL…VYAM, FGRY…LLMA, VLGA…IVLL, and FLAN…HTFF.

The protein belongs to the UbiA prenyltransferase family. Mg(2+) is required as a cofactor.

Its subcellular location is the cell inner membrane. It catalyses the reaction all-trans-octaprenyl diphosphate + 4-hydroxybenzoate = 4-hydroxy-3-(all-trans-octaprenyl)benzoate + diphosphate. It participates in cofactor biosynthesis; ubiquinone biosynthesis. Functionally, catalyzes the prenylation of para-hydroxybenzoate (PHB) with an all-trans polyprenyl group. Mediates the second step in the final reaction sequence of ubiquinone-8 (UQ-8) biosynthesis, which is the condensation of the polyisoprenoid side chain with PHB, generating the first membrane-bound Q intermediate 3-octaprenyl-4-hydroxybenzoate. The polypeptide is 4-hydroxybenzoate octaprenyltransferase (Neisseria gonorrhoeae (strain ATCC 700825 / FA 1090)).